The chain runs to 390 residues: MEVDLPVHNEYDASRFHQVTIRDPIAGADSTFTIPTRYVNLSFLNAGAQGTVVMADDLVTTQRVAIKKMQQPFVMTMSAKRAYREFILLTTIKHPNIIRLLNAFTPDTSLSTFREVYLVMELMTHNLHEVIHRLRLDHKTLSFFVYQSLCAIKHLHNSGVIHRDLKPSNIVVNDRCVLKVLDFGLARKKNVDTSMRMSDYVVTRYYRAPEVILGLPYSEKVDIWSVGCIFAEMINHTVLFPGKDRIDQWTKIYSVLGTPDDHFISQLGQSAAMYVRSLPRHQARAFSEIVPDTNFLPETENPRVHLTPHVARDLLFNMLKINPEERYSVEDALNHPYVKLWFKDDEVNAPASENRYDQEIDFADKTLIEWKELIFNEVQRYQADHDIFTG.

In terms of domain architecture, Protein kinase spans 38–338; that stretch reads YVNLSFLNAG…VEDALNHPYV (301 aa). ATP contacts are provided by residues 44–52 and K67; that span reads LNAGAQGTV. D164 acts as the Proton acceptor in catalysis. S198 is subject to Phosphoserine. A Phosphotyrosine modification is found at Y200.

Belongs to the protein kinase superfamily. CMGC Ser/Thr protein kinase family. MAP kinase subfamily. Interacts with glh-1, glh-2 (via C-terminus), glh-3 (via C-terminus) and glh-4 (via C-terminus). Interacts with csn-5; the interaction may prevent glh-1 degradation induced by kgb-1. Interacts with fos-1. It depends on Mg(2+) as a cofactor. In terms of processing, may be phosphorylated by mek-1 on Ser-198 and/or Tyr-200. Phosphorylation is induced upon Cu(2+) and arsenite-mediated cell stimulation and by fasting. Expressed in somatic and germline tissues.

The protein localises to the cytoplasm. It carries out the reaction L-seryl-[protein] + ATP = O-phospho-L-seryl-[protein] + ADP + H(+). The catalysed reaction is L-threonyl-[protein] + ATP = O-phospho-L-threonyl-[protein] + ADP + H(+). Activated by mek-1 mediated phosphorylation. No differences in basal activation between larvae and adults. Inhibited by phosphatase vhp-1. Functionally, mitogen-activated protein kinase which is an essential component of the JNK pathway composed of mlk-1, mek-1 and kgb-1. Phosphorylates the transcription factor fos-1 which prevents fos-1 dimerization and promoter binding and results in activation of target genes including F53A9.2/kreg-1 and lys-3/kreg-2. Phosphorylates jun-1 and activates the AP-1 transcription factor which is a heterodimer of jun-1 and fos-1. Phosphorylates glh-1 in vitro which may play a role in controlling glh-1 protein levels in the germline by targeting it for degradation by the proteasome. Required for oogenesis and probably also for spermatogenesis. Involved in the response to environmental stress such as heavy metals, infection and protein folding stress in an age-dependent manner. In larvae, has a protective role which becomes detrimental in adults. May control susceptibility to infection, heavy metal stress and premature lethality by regulating daf-16 cellular localization. Involved in the transcriptional response to bacterial pore-forming toxins and to fasting. Required for fasting-induced longevity. Involved in axon regeneration after injury downstream of tyrosine receptor svh-2. The polypeptide is GLH-binding kinase 1 (Caenorhabditis elegans).